Consider the following 103-residue polypeptide: Ig kappa-b5 chain C region (103 aa).

Positions 5-99 constitute an Ig-like domain; that stretch reads PTVLIFPPAP…GAGSVVQSFS (95 aa). The cysteines at positions 26 and 85 are disulfide-linked.

The polypeptide is Ig kappa-b5 chain C region (Oryctolagus cuniculus (Rabbit)).